Consider the following 588-residue polypeptide: MRQHSRMAVAALAAGANAASFTDVCTVSNVKAALPANGTLLGISMLPSAVTANPLYNQSAGMGSTTTYDYCNVTVAYTHTGKGDKVVIKYAFPKPSDYENRFYVAGGGGFSLSSDATGGLAYGAVGGATDAGYDAFDNSYDEVVLYGNGTINWDATYMFAYQALGEMTRIGKYITKGFYGQSSDSKVYTYYEGCSDGGREGMSQVQRWGEEYDGAITGAPAFRFAQQQVHHVFSSEVEQTLDYYPPPCELKKIVNATIAACDPLDGRTDGVVSRTDLCKLNFNLTSIIGEPYYCAAGTSTSLGFGFSNGKRSNVKRQAEGSTTSYQPAQNGTVTARGVAVAQAIYDGLHNSKGERAYLSWQIASELSDAETEYNSDTGKWELNIPSTGGEYVTKFIQLLNLDNLSDLNNVTYDTLVDWMNTGMVRYMDSLQTTLPDLTPFQSSGGKLLHYHGESDPSIPAASSVHYWQAVRSVMYGDKTEEEALEALEDWYQFYLIPGAAHCGTNSLQPGPYPENNMEIMIDWVENGNKPSRLNATVSSGTYAGETQMLCQWPKRPLWRGNSSFDCVNDEKSIDSWTYEFPAFKVPVY.

The signal sequence occupies residues 1–18 (MRQHSRMAVAALAAGANA). 3 disulfide bridges follow: C25-C71, C194-C502, and C261-C278. Catalysis depends on S195, which acts as the Acyl-ester intermediate. D262, D265, D269, and V271 together coordinate Ca(2+). Q317 carries the pyrrolidone carboxylic acid modification. Catalysis depends on charge relay system residues D455 and H501.

It belongs to the tannase family. Heterooctamer of 4 33 kDa and 4 30 kDa subunits linked by disulfide bond(s). Post-translationally, the protein is glycosylated to a carbohydrate content of 22.7%. The N-terminus of the 30 kDa subunit is blocked.

The catalysed reaction is digallate + H2O = 2 3,4,5-trihydroxybenzoate + H(+). Hydrolyzes ester bonds of tannic acid to produce gallic acid and glucose. This chain is Tannase, found in Aspergillus oryzae (strain ATCC 42149 / RIB 40) (Yellow koji mold).